The following is a 1373-amino-acid chain: DNA-directed RNA polymerase subunit beta (1373 aa).

Belongs to the RNA polymerase beta chain family. The RNAP catalytic core consists of 2 alpha, 1 beta, 1 beta' and 1 omega subunit. When a sigma factor is associated with the core the holoenzyme is formed, which can initiate transcription.

It catalyses the reaction RNA(n) + a ribonucleoside 5'-triphosphate = RNA(n+1) + diphosphate. Its function is as follows. DNA-dependent RNA polymerase catalyzes the transcription of DNA into RNA using the four ribonucleoside triphosphates as substrates. The protein is DNA-directed RNA polymerase subunit beta of Rickettsia massiliae (strain Mtu5).